Reading from the N-terminus, the 268-residue chain is Shikimate dehydrogenase (NADP(+)) (268 aa).

Shikimate-binding positions include 13 to 15 (SLS) and Thr60. Lys64 (proton acceptor) is an active-site residue. Residue Glu76 participates in NADP(+) binding. Residues Asn85 and Asp100 each contribute to the shikimate site. NADP(+) is bound by residues 124 to 128 (GAGGA), 148 to 153 (NRTMAR), and Ile209. Position 211 (Tyr211) interacts with shikimate. Residue Gly232 coordinates NADP(+).

It belongs to the shikimate dehydrogenase family. Homodimer.

The enzyme catalyses shikimate + NADP(+) = 3-dehydroshikimate + NADPH + H(+). It functions in the pathway metabolic intermediate biosynthesis; chorismate biosynthesis; chorismate from D-erythrose 4-phosphate and phosphoenolpyruvate: step 4/7. In terms of biological role, involved in the biosynthesis of the chorismate, which leads to the biosynthesis of aromatic amino acids. Catalyzes the reversible NADPH linked reduction of 3-dehydroshikimate (DHSA) to yield shikimate (SA). The polypeptide is Shikimate dehydrogenase (NADP(+)) (Staphylococcus aureus (strain JH1)).